Consider the following 360-residue polypeptide: Photosystem II protein D1 (360 aa).

The next 3 helical transmembrane spans lie at 29 to 46, 118 to 133, and 142 to 156; these read YIGWFGVLMIPTLLTATT, HFLLGVCGWIGREWEF, and WISVAFTAPVAAASA. His-118 is a binding site for chlorophyll a. Position 126 (Trp-126) interacts with pheophytin a. Positions 170 and 189 each coordinate [CaMn4O5] cluster. Residues 197–218 traverse the membrane as a helical segment; that stretch reads FHQLGVAGVFGGSLFSAMHGSL. His-198 is a binding site for chlorophyll a. Residues His-215 and 264–265 each bind a quinone; that span reads SF. His-215 is a binding site for Fe cation. Residue His-272 participates in Fe cation binding. A helical membrane pass occupies residues 274-288; that stretch reads FLGLWPVVGIWFTAL. The [CaMn4O5] cluster site is built by His-332, Glu-333, Asp-342, and Ala-344. Positions 345-360 are excised as a propeptide; that stretch reads SGESLPVALTAPAVIG.

It belongs to the reaction center PufL/M/PsbA/D family. In terms of assembly, PSII is composed of 1 copy each of membrane proteins PsbA, PsbB, PsbC, PsbD, PsbE, PsbF, PsbH, PsbI, PsbJ, PsbK, PsbL, PsbM, PsbT, PsbX, PsbY, PsbZ, Psb30/Ycf12, at least 3 peripheral proteins of the oxygen-evolving complex and a large number of cofactors. It forms dimeric complexes. The D1/D2 heterodimer binds P680, chlorophylls that are the primary electron donor of PSII, and subsequent electron acceptors. It shares a non-heme iron and each subunit binds pheophytin, quinone, additional chlorophylls, carotenoids and lipids. D1 provides most of the ligands for the Mn4-Ca-O5 cluster of the oxygen-evolving complex (OEC). There is also a Cl(-1) ion associated with D1 and D2, which is required for oxygen evolution. The PSII complex binds additional chlorophylls, carotenoids and specific lipids. serves as cofactor. In terms of processing, tyr-161 forms a radical intermediate that is referred to as redox-active TyrZ, YZ or Y-Z. Post-translationally, C-terminally processed by CTPA; processing is essential to allow assembly of the oxygen-evolving complex and thus photosynthetic growth.

It localises to the plastid. Its subcellular location is the chloroplast thylakoid membrane. It carries out the reaction 2 a plastoquinone + 4 hnu + 2 H2O = 2 a plastoquinol + O2. Photosystem II (PSII) is a light-driven water:plastoquinone oxidoreductase that uses light energy to abstract electrons from H(2)O, generating O(2) and a proton gradient subsequently used for ATP formation. It consists of a core antenna complex that captures photons, and an electron transfer chain that converts photonic excitation into a charge separation. The D1/D2 (PsbA/PsbD) reaction center heterodimer binds P680, the primary electron donor of PSII as well as several subsequent electron acceptors. The protein is Photosystem II protein D1 of Guillardia theta (Cryptophyte).